We begin with the raw amino-acid sequence, 339 residues long: Glycerol-3-phosphate dehydrogenase [NAD(P)+] (339 aa).

NADPH is bound by residues S15, Y16, H36, and K110. Residues K110, G139, and T141 each contribute to the sn-glycerol 3-phosphate site. A143 serves as a coordination point for NADPH. Residues K195, D248, S258, R259, and N260 each coordinate sn-glycerol 3-phosphate. The active-site Proton acceptor is K195. Residue R259 participates in NADPH binding. 2 residues coordinate NADPH: V283 and E285.

Belongs to the NAD-dependent glycerol-3-phosphate dehydrogenase family.

It localises to the cytoplasm. The catalysed reaction is sn-glycerol 3-phosphate + NAD(+) = dihydroxyacetone phosphate + NADH + H(+). The enzyme catalyses sn-glycerol 3-phosphate + NADP(+) = dihydroxyacetone phosphate + NADPH + H(+). Its pathway is membrane lipid metabolism; glycerophospholipid metabolism. In terms of biological role, catalyzes the reduction of the glycolytic intermediate dihydroxyacetone phosphate (DHAP) to sn-glycerol 3-phosphate (G3P), the key precursor for phospholipid synthesis. The polypeptide is Glycerol-3-phosphate dehydrogenase [NAD(P)+] (Klebsiella pneumoniae (strain 342)).